The chain runs to 282 residues: 4-diphosphocytidyl-2-C-methyl-D-erythritol kinase (282 aa).

Residue Lys-11 is part of the active site. An ATP-binding site is contributed by 93 to 103; it reads LVSAGLAGGSA. Asp-133 is an active-site residue.

Belongs to the GHMP kinase family. IspE subfamily.

The catalysed reaction is 4-CDP-2-C-methyl-D-erythritol + ATP = 4-CDP-2-C-methyl-D-erythritol 2-phosphate + ADP + H(+). It functions in the pathway isoprenoid biosynthesis; isopentenyl diphosphate biosynthesis via DXP pathway; isopentenyl diphosphate from 1-deoxy-D-xylulose 5-phosphate: step 3/6. Functionally, catalyzes the phosphorylation of the position 2 hydroxy group of 4-diphosphocytidyl-2C-methyl-D-erythritol. This Ehrlichia chaffeensis (strain ATCC CRL-10679 / Arkansas) protein is 4-diphosphocytidyl-2-C-methyl-D-erythritol kinase.